A 157-amino-acid chain; its full sequence is SsrA-binding protein (157 aa).

It belongs to the SmpB family.

It localises to the cytoplasm. Functionally, required for rescue of stalled ribosomes mediated by trans-translation. Binds to transfer-messenger RNA (tmRNA), required for stable association of tmRNA with ribosomes. tmRNA and SmpB together mimic tRNA shape, replacing the anticodon stem-loop with SmpB. tmRNA is encoded by the ssrA gene; the 2 termini fold to resemble tRNA(Ala) and it encodes a 'tag peptide', a short internal open reading frame. During trans-translation Ala-aminoacylated tmRNA acts like a tRNA, entering the A-site of stalled ribosomes, displacing the stalled mRNA. The ribosome then switches to translate the ORF on the tmRNA; the nascent peptide is terminated with the 'tag peptide' encoded by the tmRNA and targeted for degradation. The ribosome is freed to recommence translation, which seems to be the essential function of trans-translation. The polypeptide is SsrA-binding protein (Chlorobaculum tepidum (strain ATCC 49652 / DSM 12025 / NBRC 103806 / TLS) (Chlorobium tepidum)).